We begin with the raw amino-acid sequence, 310 residues long: Porphobilinogen deaminase (310 aa).

Cys242 is subject to S-(dipyrrolylmethanemethyl)cysteine.

Belongs to the HMBS family. In terms of assembly, monomer. It depends on dipyrromethane as a cofactor.

It carries out the reaction 4 porphobilinogen + H2O = hydroxymethylbilane + 4 NH4(+). It participates in porphyrin-containing compound metabolism; protoporphyrin-IX biosynthesis; coproporphyrinogen-III from 5-aminolevulinate: step 2/4. In terms of biological role, tetrapolymerization of the monopyrrole PBG into the hydroxymethylbilane pre-uroporphyrinogen in several discrete steps. The sequence is that of Porphobilinogen deaminase from Alcanivorax borkumensis (strain ATCC 700651 / DSM 11573 / NCIMB 13689 / SK2).